Here is a 59-residue protein sequence, read N- to C-terminus: Probable stress-associated endoplasmic reticulum protein (59 aa).

The interval 1–30 is disordered; it reads MSQSRTLRQKSQKYQENIEKRGVASPKKKE. The Cytoplasmic segment spans residues 1–34; the sequence is MSQSRTLRQKSQKYQENIEKRGVASPKKKEDGLN. Positions 16 to 30 are enriched in basic and acidic residues; that stretch reads ENIEKRGVASPKKKE. Residues 35-55 traverse the membrane as a helical; Anchor for type IV membrane protein segment; sequence INPYVLGFIIFVVVGSTLLQI. Topologically, residues 56–59 are extracellular; that stretch reads LKGQ.

The protein belongs to the RAMP4 family.

The protein resides in the membrane. It localises to the endoplasmic reticulum membrane. May interact with target proteins during translocation into the lumen of the endoplasmic reticulum. May protect unfolded target proteins against degradation and facilitate correct glycosylation. This chain is Probable stress-associated endoplasmic reticulum protein (serp), found in Dictyostelium discoideum (Social amoeba).